Reading from the N-terminus, the 915-residue chain is DNA (cytosine-5)-methyltransferase 2 (915 aa).

The segment covering 1 to 14 (MAPSSPSSARPTRA) has biased composition (low complexity). The disordered stretch occupies residues 1–171 (MAPSSPSSAR…STAANKPEED (171 aa)). The segment covering 15-30 (SGRERSAMAEEIHQNQ) has biased composition (basic and acidic residues). Over residues 42-57 (AKRRRKAASSGKKPKP) the composition is skewed to basic residues. A compositionally biased stretch (basic and acidic residues) spans 71–80 (KKGETEKTEP). Residues 81–108 (VVDDVCAEEPDEEELAMGEEEAEAEEQA) are compositionally biased toward acidic residues. A compositionally biased stretch (low complexity) spans 109 to 119 (MQEVVAAVAAG). Residues 188–313 (IVYCLGDDVY…VAYSTFANIS (126 aa)) enclose the BAH domain. The span at 315–328 (ENGQSGSETASGIS) shows a compositional bias: polar residues. Residues 315–338 (ENGQSGSETASGISSDDAGLETSS) are disordered. One can recognise an SAM-dependent MTase C5-type domain in the interval 345–876 (ATLLDLYSGC…YCLGQAYLGE (532 aa)). The 64-residue stretch at 445 to 508 (FVVQKLIGIR…EGRKRKILPL (64 aa)) folds into the Chromo domain. Cysteine 521 is an active-site residue.

The protein belongs to the class I-like SAM-binding methyltransferase superfamily. C5-methyltransferase family.

It is found in the nucleus. The enzyme catalyses a 2'-deoxycytidine in DNA + S-adenosyl-L-methionine = a 5-methyl-2'-deoxycytidine in DNA + S-adenosyl-L-homocysteine + H(+). Its function is as follows. May be involved in the CpXpG methylation and in gene silencing. In Zea mays (Maize), this protein is DNA (cytosine-5)-methyltransferase 2 (ZMET5).